The sequence spans 289 residues: Rhodopsin (289 aa).

Residues 1 to 7 (YLVNPAA) lie on the Extracellular side of the membrane. The helical transmembrane segment at 8–32 (YAALGAYMFLLILIGFPINFLTLYV) threads the bilayer. Over 33–44 (TLEHKKLRTPLN) the chain is Cytoplasmic. The chain crosses the membrane as a helical span at residues 45-67 (YILLNLAVANLFMVLGGFTTTMY). Topologically, residues 68–81 (TSMHGYFVLGRLGC) are extracellular. C81 and C158 are disulfide-bonded. Residues 82–104 (NLEAFFATLGGEIALWSLVVLAI) form a helical membrane-spanning segment. Residues 105–107 (ERW) carry the 'Ionic lock' involved in activated form stabilization motif. The Cytoplasmic segment spans residues 105–123 (ERWIVVCKPISNFRFTEDH). The helical transmembrane segment at 124–144 (AIMGLAFTWVMALACAVPPLV) threads the bilayer. Residues 145–173 (GWSRYIPEGMQCSCGVDYYTRAEGFNNES) are Extracellular-facing. N-linked (GlcNAc...) asparagine glycosylation occurs at N171. A helical membrane pass occupies residues 174 to 195 (FVIYMFIVHFLIPLSVIFFCYG). The Cytoplasmic segment spans residues 196-223 (RLLCAVKEAPAAQQESETTQRAEKEVSR). Residues 224 to 245 (MVVIMVIGFLVCWLPYASVAWW) form a helical membrane-spanning segment. The Extracellular segment spans residues 246–257 (IFCNQGSDFGPI). Residues 258 to 279 (FMTLPSFFAKSAAIYNPMIYIC) form a helical membrane-spanning segment. Residue K267 is modified to N6-(retinylidene)lysine. At 280–289 (MNKQFRHCMI) the chain is on the cytoplasmic side.

This sequence belongs to the G-protein coupled receptor 1 family. Opsin subfamily. Phosphorylated on some or all of the serine and threonine residues present in the C-terminal region. Post-translationally, contains one covalently linked retinal chromophore.

The protein resides in the membrane. The protein localises to the cell projection. Its subcellular location is the cilium. It is found in the photoreceptor outer segment. Photoreceptor required for image-forming vision at low light intensity. While most salt water fish species use retinal as chromophore, most freshwater fish use 3-dehydroretinal, or a mixture of retinal and 3-dehydroretinal. Light-induced isomerization of 11-cis to all-trans retinal triggers a conformational change that activates signaling via G-proteins. Subsequent receptor phosphorylation mediates displacement of the bound G-protein alpha subunit by arrestin and terminates signaling. This Abyssocottus korotneffi (Baikalian deep-water sculpin) protein is Rhodopsin (rho).